The primary structure comprises 257 residues: Type III pantothenate kinase (257 aa).

Position 6-13 (6-13 (DVGNTNTV)) interacts with ATP. Substrate contacts are provided by residues Tyr-102 and 109 to 112 (GADR). The active-site Proton acceptor is Asp-111. Asp-131 is a K(+) binding site. ATP is bound at residue Thr-134. Thr-186 is a binding site for substrate.

The protein belongs to the type III pantothenate kinase family. In terms of assembly, homodimer. NH4(+) serves as cofactor. Requires K(+) as cofactor.

It localises to the cytoplasm. It carries out the reaction (R)-pantothenate + ATP = (R)-4'-phosphopantothenate + ADP + H(+). The protein operates within cofactor biosynthesis; coenzyme A biosynthesis; CoA from (R)-pantothenate: step 1/5. In terms of biological role, catalyzes the phosphorylation of pantothenate (Pan), the first step in CoA biosynthesis. The sequence is that of Type III pantothenate kinase from Leptospira interrogans serogroup Icterohaemorrhagiae serovar copenhageni (strain Fiocruz L1-130).